The primary structure comprises 1378 residues: DNA-directed RNA polymerase subunit beta (1378 aa).

It belongs to the RNA polymerase beta chain family. As to quaternary structure, the RNAP catalytic core consists of 2 alpha, 1 beta, 1 beta' and 1 omega subunit. When a sigma factor is associated with the core the holoenzyme is formed, which can initiate transcription.

The catalysed reaction is RNA(n) + a ribonucleoside 5'-triphosphate = RNA(n+1) + diphosphate. In terms of biological role, DNA-dependent RNA polymerase catalyzes the transcription of DNA into RNA using the four ribonucleoside triphosphates as substrates. This is DNA-directed RNA polymerase subunit beta from Roseobacter denitrificans (strain ATCC 33942 / OCh 114) (Erythrobacter sp. (strain OCh 114)).